The following is a 218-amino-acid chain: MARGNLSSAQMGLDLAPVAASVRFLCGVDEAGRGPLAGPVYAAAVVFDPAKPMLRGLADSKVLTASKREALYDKICERALGWHIAFATVEEIDTLNILHASMLAMQRAVQGLAEKGVTPDLVQVDGNRCPQVPFPVEAIVKGDSLVKAISAASILAKVARDRELLTLHEVYPQYGFDAHSGYPTPQHLAALAQFGATPHHRRSFAPVREAIARGLVAF.

The RNase H type-2 domain maps to Arg-23–Val-216. Residues Asp-29, Glu-30, and Asp-125 each contribute to the a divalent metal cation site.

It belongs to the RNase HII family. It depends on Mn(2+) as a cofactor. The cofactor is Mg(2+).

The protein resides in the cytoplasm. It catalyses the reaction Endonucleolytic cleavage to 5'-phosphomonoester.. Functionally, endonuclease that specifically degrades the RNA of RNA-DNA hybrids. This chain is Ribonuclease HII, found in Cupriavidus pinatubonensis (strain JMP 134 / LMG 1197) (Cupriavidus necator (strain JMP 134)).